The primary structure comprises 1373 residues: DNA-directed RNA polymerase subunit beta (1373 aa).

This sequence belongs to the RNA polymerase beta chain family. The RNAP catalytic core consists of 2 alpha, 1 beta, 1 beta' and 1 omega subunit. When a sigma factor is associated with the core the holoenzyme is formed, which can initiate transcription.

It catalyses the reaction RNA(n) + a ribonucleoside 5'-triphosphate = RNA(n+1) + diphosphate. Functionally, DNA-dependent RNA polymerase catalyzes the transcription of DNA into RNA using the four ribonucleoside triphosphates as substrates. The sequence is that of DNA-directed RNA polymerase subunit beta from Rickettsia conorii (strain ATCC VR-613 / Malish 7).